Here is a 488-residue protein sequence, read N- to C-terminus: Ribulose bisphosphate carboxylase large chain (488 aa).

N127 and T177 together coordinate substrate. The Proton acceptor role is filled by K179. K181 contributes to the substrate binding site. Positions 205, 207, and 208 each coordinate Mg(2+). Residue K205 is modified to N6-carboxylysine. Residue H297 is the Proton acceptor of the active site. Substrate-binding residues include R298, H330, and S382.

Belongs to the RuBisCO large chain family. Type I subfamily. As to quaternary structure, heterohexadecamer of 8 large chains and 8 small chains. The cofactor is Mg(2+).

It is found in the plastid. It localises to the chloroplast. It carries out the reaction 2 (2R)-3-phosphoglycerate + 2 H(+) = D-ribulose 1,5-bisphosphate + CO2 + H2O. The enzyme catalyses D-ribulose 1,5-bisphosphate + O2 = 2-phosphoglycolate + (2R)-3-phosphoglycerate + 2 H(+). RuBisCO catalyzes two reactions: the carboxylation of D-ribulose 1,5-bisphosphate, the primary event in carbon dioxide fixation, as well as the oxidative fragmentation of the pentose substrate in the photorespiration process. Both reactions occur simultaneously and in competition at the same active site. This Ectocarpus siliculosus (Brown alga) protein is Ribulose bisphosphate carboxylase large chain.